Consider the following 428-residue polypeptide: MVLLHPLLTAAALLGASARAQSVVGTPFGFASGTTGGGNAAPAAPKDTNELKEWLADPNPRVIVIDKEFNFIGTEDTCTDCECCIPDSNTCGDAGQNAIKTEGSDWCGSYPATTCTYDNAGLEGMEVASDKTIIGVGDAGVIRGKGLRLVNGVSNIIIQNVHITELNPQYIWGGDAISLDGTDKIWVDHVKVSLVGRQMFVTGYESSGGVTVSNSEFDGQTKWSASCDGHHYWSVLGYGKGDQITFANNYIHHTSGRSPKIEFDSHWHAYNNFWENNSGHAFDVGEGANVLIEGNVFSNVKTPMNPEDTPGSTFAVNAQDASSCTSALGRPCIANELTSSGELSGNDEAVLSGWPKGEGDTKAMTTDKVPSYVKANAGVGKLGSGGSGAASSSASITPSPTSSAIPSSSATPSSSAYARRHYARHHHY.

A signal peptide spans methionine 1–alanine 20. Residues cysteine 83 and cysteine 107 are joined by a disulfide bond. Residue arginine 257 is part of the active site. Asparagine 276 carries N-linked (GlcNAc...) asparagine glycosylation. Cysteines 324 and 332 form a disulfide. 2 disordered regions span residues leucine 337–aspartate 367 and glycine 383–tyrosine 428. A compositionally biased stretch (low complexity) spans alanine 389–tyrosine 417. Positions alanine 418–tyrosine 428 are enriched in basic residues.

The protein belongs to the polysaccharide lyase 1 family.

Its subcellular location is the secreted. It carries out the reaction Eliminative cleavage of (1-&gt;4)-alpha-D-galacturonan methyl ester to give oligosaccharides with 4-deoxy-6-O-methyl-alpha-D-galact-4-enuronosyl groups at their non-reducing ends.. Functionally, pectinolytic enzymes consist of four classes of enzymes: pectin lyase, polygalacturonase, pectin methylesterase and rhamnogalacturonase. Among pectinolytic enzymes, pectin lyase is the most important in depolymerization of pectin, since it cleaves internal glycosidic bonds of highly methylated pectins. The chain is Probable pectin lyase F (pelF) from Aspergillus flavus (strain ATCC 200026 / FGSC A1120 / IAM 13836 / NRRL 3357 / JCM 12722 / SRRC 167).